The sequence spans 269 residues: UPF0739 protein C1orf74 (269 aa).

The protein belongs to the UPF0739 family.

In Homo sapiens (Human), this protein is UPF0739 protein C1orf74 (C1orf74).